We begin with the raw amino-acid sequence, 440 residues long: Polycomb group protein VERNALIZATION 2 (440 aa).

A C2H2-type zinc finger spans residues 86-111; sequence EDCSCPFCSMLCGSFKGLQFHLNSSH. The Nuclear localization signal signature appears at 156–163; sequence KPRKRRQR. The tract at residues 267–345 is VEFS-box; the sequence is RQFYHSHRVQ…GHISWACEVF (79 aa). The interval 398–440 is disordered; the sequence is NNNNNSVDHPSDSNTNNNNIVDHPNDIKNKNNVDNKDNNSRDK. The segment covering 420–440 has biased composition (basic and acidic residues); that stretch reads HPNDIKNKNNVDNKDNNSRDK.

This sequence belongs to the VEFS (VRN2-EMF2-FIS2-SU(Z)12) family. In terms of assembly, probable component of a PcG complex. In plants, PcG complexes are probably composed of a member of the EZ family (CLF or MEA), FIE, and a member of the VEFS family (FIS2, VRN2 or EMF2). Component of the plant homeodomain / polycomb repressive complex 2 (PHD-PRC2) large complex during prolonged cold, composed of core PRC2 components (VRN2, EZA1, FIE and MSI1), and three related PHD finger proteins (VIL1, VIL2 and VIN3) that mediates histone H3 trimethylation on 'Lys-27' (H3K27me3). Binds to ALP1. Weakly expressed. Expressed both during, and in the absence of vernalization.

The protein localises to the nucleus. In terms of biological role, polycomb group (PcG) protein. Plays a central role in vernalization by maintaining repressed the homeotic gene FLC, a floral repressor, after a cold treatment. PcG proteins act by forming multiprotein complexes, which are required to maintain the transcriptionally repressive state of homeotic genes throughout development. PcG proteins are not required to initiate repression, but to maintain it during later stages of development. They probably act via the methylation of histones, rendering chromatin heritably changed in its expressibility. Associates constitutively along the whole FLC locus. The protein is Polycomb group protein VERNALIZATION 2 (VRN2) of Arabidopsis thaliana (Mouse-ear cress).